A 478-amino-acid chain; its full sequence is Membrane-bound lytic murein transglycosylase F (478 aa).

The first 29 residues, 1-29 (MFPDSSYLFSMRSLSRFLIAIFGCGALLA), serve as a signal peptide directing secretion. Positions 30-269 (SCDSFERSVL…RLLDRYYGHI (240 aa)) are non-LT domain. The LT domain stretch occupies residues 271–478 (RLHHTDVNGI…RKEDDSWQEF (208 aa)). Residue E316 is part of the active site.

In the N-terminal section; belongs to the bacterial solute-binding protein 3 family. This sequence in the C-terminal section; belongs to the transglycosylase Slt family.

The protein localises to the cell outer membrane. It carries out the reaction Exolytic cleavage of the (1-&gt;4)-beta-glycosidic linkage between N-acetylmuramic acid (MurNAc) and N-acetylglucosamine (GlcNAc) residues in peptidoglycan, from either the reducing or the non-reducing ends of the peptidoglycan chains, with concomitant formation of a 1,6-anhydrobond in the MurNAc residue.. Murein-degrading enzyme that degrades murein glycan strands and insoluble, high-molecular weight murein sacculi, with the concomitant formation of a 1,6-anhydromuramoyl product. Lytic transglycosylases (LTs) play an integral role in the metabolism of the peptidoglycan (PG) sacculus. Their lytic action creates space within the PG sacculus to allow for its expansion as well as for the insertion of various structures such as secretion systems and flagella. This Nitrosospira multiformis (strain ATCC 25196 / NCIMB 11849 / C 71) protein is Membrane-bound lytic murein transglycosylase F.